The primary structure comprises 214 residues: Dephospho-CoA kinase (214 aa).

Residues 4–204 (IVGLTGGIGS…QRYLQLAQQK (201 aa)) form the DPCK domain. An ATP-binding site is contributed by 12 to 17 (GSGKST).

Belongs to the CoaE family.

It localises to the cytoplasm. It catalyses the reaction 3'-dephospho-CoA + ATP = ADP + CoA + H(+). It participates in cofactor biosynthesis; coenzyme A biosynthesis; CoA from (R)-pantothenate: step 5/5. Its function is as follows. Catalyzes the phosphorylation of the 3'-hydroxyl group of dephosphocoenzyme A to form coenzyme A. The polypeptide is Dephospho-CoA kinase (Mannheimia succiniciproducens (strain KCTC 0769BP / MBEL55E)).